A 384-amino-acid polypeptide reads, in one-letter code: Glucans biosynthesis protein C (384 aa).

Transmembrane regions (helical) follow at residues 17 to 37 (AWLMLLGIPFHISLIYSTHSW), 54 to 74 (FIHAFRMQVFFVISGYFSYML), 91 to 111 (VGIPMLTAIPLLTLPQFILLQ), 140 to 160 (LWFLLVLVILTTVSIGIFTWF), 173 to 193 (AISLARLSLIFFLLGMAYAAI), 212 to 232 (FIVMQTLFYVPFFILGALAFI), 240 to 260 (FTTPSRGCTLGAAVAFIAYLL), 274 to 294 (TESVITMVMGLWMVNVVFSLG), 311 to 331 (ASLFIYLVHHPLTLFFGAYIT), and 338 to 358 (LIGFLCGLIFVMGIALILYEI).

The protein belongs to the acyltransferase 3 family. OpgC subfamily.

The protein localises to the cell membrane. Its pathway is glycan metabolism; osmoregulated periplasmic glucan (OPG) biosynthesis. Functionally, necessary for the succinyl substitution of periplasmic glucans. Could catalyze the transfer of succinyl residues from the cytoplasmic side of the membrane to the nascent glucan backbones on the periplasmic side of the membrane. In Salmonella agona (strain SL483), this protein is Glucans biosynthesis protein C.